Consider the following 624-residue polypeptide: Kelch-like ECH-associated protein 1 (624 aa).

Cysteine 38 is modified (S-(2-succinyl)cysteine). A BTB domain is found at 77–149; sequence CDVTLQVKYQ…AYTASISMGE (73 aa). An N5-[4-(S-L-cysteinyl)-5-methyl-1H-imidazol-2-yl]-L-ornithine (Arg-Cys) (interchain with C-151 in KEAP1) cross-link involves residue arginine 135. Cysteine 151 bears the S-(2,3-dicarboxypropyl)cysteine; alternate mark. An S-(2-succinyl)cysteine; alternate modification is found at cysteine 151. Residue cysteine 151 is modified to S-nitrosocysteine; alternate. Residue cysteine 151 forms an N5-[4-(S-L-cysteinyl)-5-methyl-1H-imidazol-2-yl]-L-ornithine (Cys-Arg) (interchain with R-135 in KEAP1) linkage. One can recognise a BACK domain in the interval 184–286; sequence AIGIANFAEQ…TPNFLQMQLQ (103 aa). An S-(2-succinyl)cysteine modification is found at cysteine 241. 2 positions are modified to S-(2,3-dicarboxypropyl)cysteine: cysteine 257 and cysteine 273. Cysteine 288 bears the S-(2,3-dicarboxypropyl)cysteine; alternate mark. Cysteine 288 carries the post-translational modification S-(2-succinyl)cysteine; alternate. Position 319 is an S-(2-succinyl)cysteine (cysteine 319). Kelch repeat units follow at residues 327–372, 373–423, 424–470, 471–517, 518–564, and 565–611; these read LIYT…VVGG, LLYA…VIDG, HIYA…VLNR, LLYA…VLHN, CIYA…VHQG, and RIYV…VTME. At cysteine 434 the chain carries S-cGMP-cysteine. Cysteine 613 carries the S-(2-succinyl)cysteine modification.

This sequence belongs to the KEAP1 family. In terms of assembly, component of the BCR(KEAP1) E3 ubiquitin ligase complex, at least composed of 2 molecules of CUL3, 2 molecules of KEAP1, and RBX1. Interacts with NFE2L2/NRF2; the interaction is direct. Forms a ternary complex with NFE2L2/NRF2 and PGAM5. Interacts with (phosphorylated) SQSTM1/p62; the interaction is direct and inactivates the BCR(KEAP1) complex by sequestering it in inclusion bodies, promoting its degradation. Interacts with NFE2L1. Interacts with BPTF and PTMA. Interacts with MAP1LC3B. Interacts indirectly with ENC1. Interacts with SESN1 and SESN2. Interacts with HSP90AA1 and HSP90AB1. Interacts with PGCKA1; this interaction prevents the ubiquitination of KEAP1 by TRIM25, thus protecting KEAP1 from degradation. As to quaternary structure, (Microbial infection) Interacts with ebolavirus protein VP24; this interaction activates transcription factor NFE2L2/NRF2 by blocking its interaction with KEAP1. In terms of processing, non-enzymatic covalent modifications of reactive cysteines by electrophile metabolites inactivate the BCR(KEAP1) complex. Accumulation of fumarate promotes the formation of cysteine S-succination (S-(2-succinyl)cysteine), leading to inactivate the BCR(KEAP1) complex and promote NFE2L2/NRF2 nuclear accumulation and activation. Nitric oxide-dependent 8-Nitro-cGMP formation promotes cysteine guanylation (S-cGMP-cysteine), leading to NFE2L2/NRF2 nuclear accumulation and activation. Itaconate, an anti-inflammatory metabolite generated in response to lipopolysaccharide, alkylates cysteines, activating NFE2L2/NRF2. Methylglyoxal, a reactive metabolite that accumulates when the glycolytic enzyme PGK1 is inhibited, promotes formation of a methylimidazole cross-link between proximal Cys-151 and Arg-135 on another KEAP1 molecule, resulting in an inactive dimer that inactivates the BCR(KEAP1) complex. Degraded via a proteasomal-independent process during selective autophagy: interaction with phosphorylated SQSTM1/p62 sequesters KEAP1 in inclusion bodies, leading to its degradation. Post-translationally, auto-ubiquitinated by the BCR(KEAP1) complex. Quinone-induced oxidative stress, but not sulforaphane, increases its ubiquitination. Ubiquitination and subsequent degradation is most pronounced following prolonged exposure of cells to oxidative stress, particularly in glutathione-deficient cells that are highly susceptible to oxidative stress. Deubiquitinated by USP25; leading to stabilization. Ubiquitinated by TRIM25; leading to degradation upon ER stress. As to expression, broadly expressed, with highest levels in skeletal muscle.

The protein localises to the cytoplasm. It is found in the nucleus. It functions in the pathway protein modification; protein ubiquitination. With respect to regulation, ubiquitin ligase activity of the BCR(KEAP1) complex is inhibited by oxidative stress and electrophile metabolites such as sulforaphane. Electrophile metabolites react with reactive cysteine residues in KEAP1 and trigger non-enzymatic covalent modifications of these cysteine residues, leading to inactivate the ubiquitin ligase activity of the BCR(KEAP1) complex. Selective autophagy also inactivates the BCR(KEAP1) complex via interaction between KEAP1 and SQSTM1/p62, which sequesters the complex in inclusion bodies and promotes its degradation. In terms of biological role, substrate-specific adapter of a BCR (BTB-CUL3-RBX1) E3 ubiquitin ligase complex that regulates the response to oxidative stress by targeting NFE2L2/NRF2 for ubiquitination. KEAP1 acts as a key sensor of oxidative and electrophilic stress: in normal conditions, the BCR(KEAP1) complex mediates ubiquitination and degradation of NFE2L2/NRF2, a transcription factor regulating expression of many cytoprotective genes. In response to oxidative stress, different electrophile metabolites trigger non-enzymatic covalent modifications of highly reactive cysteine residues in KEAP1, leading to inactivate the ubiquitin ligase activity of the BCR(KEAP1) complex, promoting NFE2L2/NRF2 nuclear accumulation and expression of phase II detoxifying enzymes. In response to selective autophagy, KEAP1 is sequestered in inclusion bodies following its interaction with SQSTM1/p62, leading to inactivation of the BCR(KEAP1) complex and activation of NFE2L2/NRF2. The BCR(KEAP1) complex also mediates ubiquitination of SQSTM1/p62, increasing SQSTM1/p62 sequestering activity and degradation. The BCR(KEAP1) complex also targets BPTF and PGAM5 for ubiquitination and degradation by the proteasome. This is Kelch-like ECH-associated protein 1 from Homo sapiens (Human).